We begin with the raw amino-acid sequence, 249 residues long: Flagellar L-ring protein (249 aa).

Positions 1–25 (MSRLRTSHALRTAAALVAVGCLASG) are cleaved as a signal peptide. C26 carries N-palmitoyl cysteine lipidation. C26 carries the S-diacylglycerol cysteine lipid modification.

It belongs to the FlgH family. In terms of assembly, the basal body constitutes a major portion of the flagellar organelle and consists of four rings (L,P,S, and M) mounted on a central rod.

It is found in the cell outer membrane. The protein resides in the bacterial flagellum basal body. In terms of biological role, assembles around the rod to form the L-ring and probably protects the motor/basal body from shearing forces during rotation. The chain is Flagellar L-ring protein from Afipia carboxidovorans (strain ATCC 49405 / DSM 1227 / KCTC 32145 / OM5) (Oligotropha carboxidovorans).